Reading from the N-terminus, the 268-residue chain is MATYIVGDIQGCFDELQQLLEQVNFSASHDQLWLAGDLVARGPKSLETLRFVKSLGDSAKVVLGNHDLHLMAVSQGLKKVKDKDKTAPIFSAPDKKELLTWLSQQPLLAEHDDFVMCHAGISPLWDLDTARNCAREVEAIIRSKQLPWLLENMYSNQPDLWDESLSGLDRYRYTINTFTRMRFCFPDGRLDMDCKLPPQEVSEDELVPWFKLPQRVPLEKAVLFGHWAALQGHIDENIIGLDTGCVWGGSLTMIRWEDKQVFTQQALS.

It belongs to the Ap4A hydrolase family.

It catalyses the reaction P(1),P(4)-bis(5'-adenosyl) tetraphosphate + H2O = 2 ADP + 2 H(+). Functionally, hydrolyzes diadenosine 5',5'''-P1,P4-tetraphosphate to yield ADP. The polypeptide is Bis(5'-nucleosyl)-tetraphosphatase, symmetrical (Vibrio campbellii (strain ATCC BAA-1116)).